Reading from the N-terminus, the 354-residue chain is MSLDKIMNEAISPWMKGDGPDSDIVLSSRIRLARNFKQYQFSTMQNEEEAKQIHELFKKKFINKAVGSFGEFGLLKMNELTPLQRRVLVEKHLISPNLAGTEYGACLLSESEHISVMLNEEDHIRIQCLFSGLQLSEALQSANQIDNWIEKEVEYAFDESLGYITSCPTNVGTGLRASVMIHLPGLVLTKRISRIIQVIQKLGLVVRGIYGEGSEALGNIFQVSNQMTLGKSEEDIIADLKSVIQQIIQQEKMARELIVQNSSIELEDKVYRSYGILANSRLIQSAEAANCLSDVRLGIDLGYIKGISRNILTELMVLTQPGILQQYAGGPLGPEERDYRRATLIRERLSIEKN.

Residues 24-254 (IVLSSRIRLA…QQIIQQEKMA (231 aa)) enclose the Phosphagen kinase C-terminal domain. ATP is bound by residues 27–31 (SSRIR), His-92, Arg-125, 176–180 (RASVM), and 207–212 (RGIYGE). The RDXXRA motif of the pArg binding pocket involved in allosteric regulation signature appears at 337 to 342 (RDYRRA).

Belongs to the ATP:guanido phosphotransferase family.

It catalyses the reaction L-arginyl-[protein] + ATP = N(omega)-phospho-L-arginyl-[protein] + ADP + H(+). Appears to be allosterically activated by the binding of pArg-containing polypeptides to the pArg-binding pocket localized in the C-terminal domain of McsB. Catalyzes the specific phosphorylation of arginine residues in a large number of proteins. Is part of the bacterial stress response system. Protein arginine phosphorylation has a physiologically important role and is involved in the regulation of many critical cellular processes, such as protein homeostasis, motility, competence, and stringent and stress responses, by regulating gene expression and protein activity. This is Protein-arginine kinase from Bacillus cereus (strain G9842).